A 334-amino-acid polypeptide reads, in one-letter code: Ornithine carbamoyltransferase (334 aa).

Carbamoyl phosphate is bound by residues 57-60 (STRT), arginine 108, and 135-138 (HPTQ). Residues asparagine 168, aspartate 232, and 236–237 (SM) each bind L-ornithine. Carbamoyl phosphate is bound by residues 274–275 (CL) and arginine 321.

It belongs to the aspartate/ornithine carbamoyltransferase superfamily. OTCase family.

The protein resides in the cytoplasm. It carries out the reaction carbamoyl phosphate + L-ornithine = L-citrulline + phosphate + H(+). The protein operates within amino-acid biosynthesis; L-arginine biosynthesis; L-arginine from L-ornithine and carbamoyl phosphate: step 1/3. Functionally, reversibly catalyzes the transfer of the carbamoyl group from carbamoyl phosphate (CP) to the N(epsilon) atom of ornithine (ORN) to produce L-citrulline. The sequence is that of Ornithine carbamoyltransferase from Cutibacterium acnes (strain DSM 16379 / KPA171202) (Propionibacterium acnes).